Here is a 493-residue protein sequence, read N- to C-terminus: GTPase Der (493 aa).

An EngA-type G 1 domain is found at 3–166 (PVIALVGRPN…EALGIFPKDN (164 aa)). Residues 9-16 (GRPNVGKS), 56-60 (DTGGI), and 118-121 (NKVD) contribute to the GTP site. A compositionally biased stretch (acidic residues) spans 167-184 (VEEEGEGEPASEEVAEGE). Residues 167 to 195 (VEEEGEGEPASEEVAEGEEPTRIPGPSEK) are disordered. The EngA-type G 2 domain occupies 198–371 (IKIAIIGRPN…SVQESFRSAV (174 aa)). GTP contacts are provided by residues 204 to 211 (GRPNVGKS), 251 to 255 (DTAGV), and 316 to 319 (NKWD). One can recognise a KH-like domain in the interval 372 to 456 (TRWPTSRLTS…PIRIEYKGGE (85 aa)). Residues 454–463 (GGENPYEGKK) are compositionally biased toward basic and acidic residues. A disordered region spans residues 454–493 (GGENPYEGKKNSLTARQVNKKRRLMSHHKKAEKKKKDKRR). The segment covering 471-493 (VNKKRRLMSHHKKAEKKKKDKRR) has biased composition (basic residues).

Belongs to the TRAFAC class TrmE-Era-EngA-EngB-Septin-like GTPase superfamily. EngA (Der) GTPase family. Associates with the 50S ribosomal subunit.

Functionally, GTPase that plays an essential role in the late steps of ribosome biogenesis. The sequence is that of GTPase Der from Pseudomonas aeruginosa (strain LESB58).